A 78-amino-acid polypeptide reads, in one-letter code: Acyl carrier protein (78 aa).

In terms of domain architecture, Carrier spans 2-77 (DNIVERVKKI…QAVDYILAGK (76 aa)). Ser-37 is modified (O-(pantetheine 4'-phosphoryl)serine).

The protein belongs to the acyl carrier protein (ACP) family. 4'-phosphopantetheine is transferred from CoA to a specific serine of apo-ACP by AcpS. This modification is essential for activity because fatty acids are bound in thioester linkage to the sulfhydryl of the prosthetic group.

It is found in the cytoplasm. It participates in lipid metabolism; fatty acid biosynthesis. Its function is as follows. Carrier of the growing fatty acid chain in fatty acid biosynthesis. In Dechloromonas aromatica (strain RCB), this protein is Acyl carrier protein.